The chain runs to 199 residues: MPSPAPSGLAPGFLVAAPALGDPNFAGSLVLMAEHHGEGALGFVVNRPGPVTVAEVLASVDEDLRRAAEANGRAGAPVLVGGPVQPERLWILFRPGGIGADAEGAVPVGNGLSLGGSRELLEALVRAPRGDPFLLLLGYAGWAPMQVEREVAAGAWVPLELEGSDLVFDVPLEQRWETAVRRLGLEPGGFLVGGGGASA.

The protein belongs to the UPF0301 (AlgH) family.

The sequence is that of UPF0301 protein Anae109_0457 from Anaeromyxobacter sp. (strain Fw109-5).